Reading from the N-terminus, the 353-residue chain is Methylthioribose-1-phosphate isomerase (353 aa).

Substrate is bound by residues 48-50, arginine 94, and glutamine 201; that span reads RGA. Residue aspartate 242 is the Proton donor of the active site. 252-253 contacts substrate; it reads NK.

It belongs to the eIF-2B alpha/beta/delta subunits family. MtnA subfamily.

It catalyses the reaction 5-(methylsulfanyl)-alpha-D-ribose 1-phosphate = 5-(methylsulfanyl)-D-ribulose 1-phosphate. Its pathway is amino-acid biosynthesis; L-methionine biosynthesis via salvage pathway; L-methionine from S-methyl-5-thio-alpha-D-ribose 1-phosphate: step 1/6. In terms of biological role, catalyzes the interconversion of methylthioribose-1-phosphate (MTR-1-P) into methylthioribulose-1-phosphate (MTRu-1-P). The protein is Methylthioribose-1-phosphate isomerase of Roseiflexus sp. (strain RS-1).